Here is a 218-residue protein sequence, read N- to C-terminus: tRNA (guanine-N(7)-)-methyltransferase (218 aa).

The disordered stretch occupies residues 1 to 25 (MRLKNKPWANELVEEHPESALDRPN). Positions 13 to 25 (VEEHPESALDRPN) are enriched in basic and acidic residues. Residues Glu-45, Glu-70, Asp-97, and Asp-119 each coordinate S-adenosyl-L-methionine. Asp-119 is an active-site residue. A substrate-binding site is contributed by Lys-123. Positions 125–130 (RHEKRR) are interaction with RNA. Residues Asp-155 and 195-198 (TEYE) each bind substrate.

This sequence belongs to the class I-like SAM-binding methyltransferase superfamily. TrmB family.

It carries out the reaction guanosine(46) in tRNA + S-adenosyl-L-methionine = N(7)-methylguanosine(46) in tRNA + S-adenosyl-L-homocysteine. Its pathway is tRNA modification; N(7)-methylguanine-tRNA biosynthesis. Catalyzes the formation of N(7)-methylguanine at position 46 (m7G46) in tRNA. The chain is tRNA (guanine-N(7)-)-methyltransferase from Lactobacillus delbrueckii subsp. bulgaricus (strain ATCC BAA-365 / Lb-18).